A 422-amino-acid chain; its full sequence is Proton-gated ion channel subunit pbo-6 (422 aa).

An N-terminal signal peptide occupies residues 1–20 (MQCSFLTIFIFITTVTVGVA). Residues 21-233 (EFSEQYQGSS…IKVARKPFYY (213 aa)) lie on the Extracellular side of the membrane. Cys-151 and Cys-165 are joined by a disulfide. Transmembrane regions (helical) follow at residues 234–254 (LISL…GLFA), 268–288 (LGVT…EKVP), and 294–314 (VPLL…ATIL). Residues 315–378 (TSTVMRVHAK…GEVSRRMDYL (64 aa)) lie on the Cytoplasmic side of the membrane. The chain crosses the membrane as a helical span at residues 379–399 (LASVFIIIISTPTLYLFYMCF).

It belongs to the ligand-gated ion channel (TC 1.A.9) family. Acetylcholine receptor (TC 1.A.9.1) subfamily. In terms of assembly, the functional channel is a hetero-oligomer of pbo-5 and pbo-6. Expressed in the posterior body muscles.

The protein resides in the membrane. In terms of biological role, forms a proton-gated ion channel with pbo-5 that is activated by acidification of the posterior coelomic space, leading to posterior body wall muscle contraction (pBoc) during the defecation cycle. Not necessary for stimulation of posterior body contraction (pBoc). Does not bind neurotransmitters such as acetylcholine, gamma-aminobutyric acid, glycine, serotonin, glutamate or choline. This chain is Proton-gated ion channel subunit pbo-6, found in Caenorhabditis elegans.